A 446-amino-acid chain; its full sequence is Solute carrier family 52, riboflavin transporter, member 2 (446 aa).

A run of 4 helical transmembrane segments spans residues 14-34 (LLVA…WVEL), 47-67 (LPSY…VVTL), 79-99 (APIQ…APLW), and 104-124 (VMAG…LALA). A glycan (N-linked (GlcNAc...) asparagine) is linked at asparagine 129. 2 helical membrane-spanning segments follow: residues 147 to 167 (FFLG…GQGV) and 196 to 216 (FFGA…GLLL). Positions 228 to 267 (GSGTGLRGGAPGVEEEEEEEASPLQEPPSQAAGNTPSPDP) are disordered. Residues 229–238 (SGTGLRGGAP) show a composition bias toward gly residues. The span at 254–263 (PPSQAAGNTP) shows a compositional bias: polar residues. Helical transmembrane passes span 278–298 (ACLL…LPAV), 313–333 (LAVV…MGIL), 340–360 (LGGL…LAIL), 367–387 (VGTS…LGVF), and 405–425 (ALLA…VTMF).

The protein belongs to the riboflavin transporter family.

The protein localises to the cell membrane. It catalyses the reaction riboflavin(in) = riboflavin(out). Its activity is regulated as follows. Riboflavin transport is Na(+)-independent but moderately pH-sensitive. Activity is strongly inhibited by riboflavin analogs, such as lumiflavin. Weakly inhibited by flavin adenine dinucleotide (FAD) and flavin mononucleotide (FMN). Its function is as follows. Plasma membrane transporter mediating the uptake by cells of the water soluble vitamin B2/riboflavin that plays a key role in biochemical oxidation-reduction reactions of the carbohydrate, lipid, and amino acid metabolism. May also act as a receptor for 4-hydroxybutyrate. (Microbial infection) In case of infection by porcine endogenous retrovirus (PERV-A), acts as a cell receptor to retroviral envelopes. The protein is Solute carrier family 52, riboflavin transporter, member 2 (SLC52A2) of Sus scrofa (Pig).